The sequence spans 145 residues: Type II secretion system core protein G (145 aa).

A propeptide spans 1–9 (MRATDKQRG) (leader sequence). N-methylphenylalanine is present on Phe10. The chain crosses the membrane as a helical span at residues 10 to 30 (FTLLEIMVVIVIIGVLASLVV). A disordered region spans residues 123–145 (AGPDGEMGTEDDITNWGLSKKKK).

The protein belongs to the GSP G family. In terms of assembly, type II secretion system is composed of four main components: the outer membrane complex, the inner membrane complex, the cytoplasmic secretion ATPase and the periplasm-spanning pseudopilus. Forms homomultimers. Post-translationally, cleaved by the prepilin peptidase. In terms of processing, methylated by prepilin peptidase at the amino group of the N-terminal phenylalanine once the leader sequence is cleaved.

It is found in the cell inner membrane. Core component of the type II secretion system required for the energy-dependent secretion of extracellular factors such as proteases and toxins from the periplasm. Pseudopilin (pilin-like) protein that polymerizes to form the pseudopilus. Further polymerization triggers pseudopilus growth. The polypeptide is Type II secretion system core protein G (gspG) (Escherichia coli (strain K12)).